A 389-amino-acid polypeptide reads, in one-letter code: MTGSLLDQLRQMTIVVADTGDIQAIEQFTPRDATTNPSLITAAAQMPQYQQIVDDTLKQARAELGPEAKAAAVATLAFDRLAVAFGLKILAIVPGRVSTEVDARLSYDTEATIEKGRSLIAQYEAAGISRERVLIKIASTWEGIRAAEILEDEGIHCNLTLLFGVHQAIACAEAGVTLISPFVGRILDWYKKETGRDYEPHEDPGVVSVTTIYNYYKKFGYQTQVMGASFRNIGEIVELAGCDLLTISPKLLEQLQATDAELVRKLDPDQAAGLEIEKIDMDQATFEKRHAEDRMASEKLDEGIKGFTNALVALEKLLADRLARLEGEVALNQAFESIFRTFDLDGDGFITREEWMGTDAVFDAIDLNHDGKITAEELGAGIGAVSKLA.

Lys-136 functions as the Schiff-base intermediate with substrate in the catalytic mechanism. EF-hand domains lie at 330–365 and 365–388; these read ALNQAFESIFRTFDLDGDGFITREEWMGTDAVFDAI and IDLNHDGKITAEELGAGIGAVSKL. Positions 343, 345, 347, 354, 366, 368, 370, 372, and 377 each coordinate Ca(2+).

It belongs to the transaldolase family. Type 1 subfamily.

The protein localises to the cytoplasm. The enzyme catalyses D-sedoheptulose 7-phosphate + D-glyceraldehyde 3-phosphate = D-erythrose 4-phosphate + beta-D-fructose 6-phosphate. It functions in the pathway carbohydrate degradation; pentose phosphate pathway; D-glyceraldehyde 3-phosphate and beta-D-fructose 6-phosphate from D-ribose 5-phosphate and D-xylulose 5-phosphate (non-oxidative stage): step 2/3. Transaldolase is important for the balance of metabolites in the pentose-phosphate pathway. This is Transaldolase from Gloeobacter violaceus (strain ATCC 29082 / PCC 7421).